The sequence spans 151 residues: UPF0756 membrane protein Dred_1676 (151 aa).

4 consecutive transmembrane segments (helical) span residues 9–29, 47–67, 75–95, and 111–131; these read VILLLIGLVAQSNLIAICASV, THGLELGLLFLLLSILVPIAT, LLYNVSSLPGFLSIVGGILAT, and IIFGLIVGSVIGIIFFNGQPV.

It belongs to the UPF0756 family.

Its subcellular location is the cell membrane. The polypeptide is UPF0756 membrane protein Dred_1676 (Desulforamulus reducens (strain ATCC BAA-1160 / DSM 100696 / MI-1) (Desulfotomaculum reducens)).